The primary structure comprises 398 residues: Transposase for insertion sequence element ISRM5 (398 aa).

It belongs to the transposase mutator family.

Required for the transposition of the insertion element. The sequence is that of Transposase for insertion sequence element ISRM5 from Rhizobium meliloti (strain 1021) (Ensifer meliloti).